The chain runs to 82 residues: Exodeoxyribonuclease 7 small subunit (82 aa).

Belongs to the XseB family. As to quaternary structure, heterooligomer composed of large and small subunits.

It localises to the cytoplasm. The enzyme catalyses Exonucleolytic cleavage in either 5'- to 3'- or 3'- to 5'-direction to yield nucleoside 5'-phosphates.. In terms of biological role, bidirectionally degrades single-stranded DNA into large acid-insoluble oligonucleotides, which are then degraded further into small acid-soluble oligonucleotides. This chain is Exodeoxyribonuclease 7 small subunit, found in Pectobacterium atrosepticum (strain SCRI 1043 / ATCC BAA-672) (Erwinia carotovora subsp. atroseptica).